Reading from the N-terminus, the 415-residue chain is 1-deoxy-D-xylulose 5-phosphate reductoisomerase (415 aa).

NADPH contacts are provided by T10, G11, S12, I13, G36, R37, N38, and N128. K129 contributes to the 1-deoxy-D-xylulose 5-phosphate binding site. Residue E130 participates in NADPH binding. D154 contributes to the Mn(2+) binding site. 1-deoxy-D-xylulose 5-phosphate is bound by residues S155, E156, S192, and H215. A Mn(2+)-binding site is contributed by E156. G221 contributes to the NADPH binding site. 1-deoxy-D-xylulose 5-phosphate-binding residues include S228, N233, K234, and E237. Position 237 (E237) interacts with Mn(2+).

It belongs to the DXR family. Mg(2+) is required as a cofactor. The cofactor is Mn(2+).

It catalyses the reaction 2-C-methyl-D-erythritol 4-phosphate + NADP(+) = 1-deoxy-D-xylulose 5-phosphate + NADPH + H(+). It participates in isoprenoid biosynthesis; isopentenyl diphosphate biosynthesis via DXP pathway; isopentenyl diphosphate from 1-deoxy-D-xylulose 5-phosphate: step 1/6. In terms of biological role, catalyzes the NADPH-dependent rearrangement and reduction of 1-deoxy-D-xylulose-5-phosphate (DXP) to 2-C-methyl-D-erythritol 4-phosphate (MEP). The chain is 1-deoxy-D-xylulose 5-phosphate reductoisomerase from Synechococcus sp. (strain CC9605).